The sequence spans 1188 residues: uncharacterized protein (1188 aa).

4 disordered regions span residues G126 to E468, E484 to P771, A790 to L823, and Q847 to F1039. Composition is skewed to pro residues over residues I139–P151, G159–V193, and I208–A240. S260 bears the Phosphoserine mark. Residues E322–T331 are compositionally biased toward basic and acidic residues. Residues T389 to P418 are compositionally biased toward pro residues. Over residues K432–L441 the composition is skewed to low complexity. 2 stretches are compositionally biased toward basic and acidic residues: residues K501–T514 and I566–K583. Residues L618–P633 are compositionally biased toward low complexity. Pro residues predominate over residues A640–P652. The residue at position 666 (T666) is a Phosphothreonine. Residues P689–S703 show a composition bias toward low complexity. Polar residues predominate over residues A875 to T893. Basic and acidic residues predominate over residues L920–R931. Residues I986–P1001 show a composition bias toward pro residues. Residues G1007–D1019 show a composition bias toward polar residues. Residues A1026–G1035 show a composition bias toward low complexity. Asymmetric dimethylarginine is present on R1044. Positions G1069–S1160 are disordered. Omega-N-methylarginine is present on residues R1073 and R1084. R1157 is subject to Asymmetric dimethylarginine.

This is an uncharacterized protein from Homo sapiens (Human).